A 426-amino-acid polypeptide reads, in one-letter code: Enolase (426 aa).

Gln-163 contributes to the (2R)-2-phosphoglycerate binding site. Glu-205 serves as the catalytic Proton donor. Positions 242, 286, and 313 each coordinate Mg(2+). (2R)-2-phosphoglycerate-binding residues include Lys-338, Arg-367, Ser-368, and Lys-389. The active-site Proton acceptor is Lys-338.

It belongs to the enolase family. The cofactor is Mg(2+).

It is found in the cytoplasm. The protein resides in the secreted. The protein localises to the cell surface. It catalyses the reaction (2R)-2-phosphoglycerate = phosphoenolpyruvate + H2O. The protein operates within carbohydrate degradation; glycolysis; pyruvate from D-glyceraldehyde 3-phosphate: step 4/5. Its function is as follows. Catalyzes the reversible conversion of 2-phosphoglycerate (2-PG) into phosphoenolpyruvate (PEP). It is essential for the degradation of carbohydrates via glycolysis. This Gemmatimonas aurantiaca (strain DSM 14586 / JCM 11422 / NBRC 100505 / T-27) protein is Enolase.